A 39-amino-acid polypeptide reads, in one-letter code: LIM/homeobox protein xLIM-2B (39 aa).

The segment at residues 1–39 (KAKQLETLKAAFAATPKPTRHIREQLAQETGLNMRVIQV) is a DNA-binding region (homeobox).

Its subcellular location is the nucleus. The chain is LIM/homeobox protein xLIM-2B (lim2b) from Xenopus laevis (African clawed frog).